We begin with the raw amino-acid sequence, 110 residues long: Large ribosomal subunit protein uL22 (110 aa).

Belongs to the universal ribosomal protein uL22 family. In terms of assembly, part of the 50S ribosomal subunit.

Its function is as follows. This protein binds specifically to 23S rRNA; its binding is stimulated by other ribosomal proteins, e.g. L4, L17, and L20. It is important during the early stages of 50S assembly. It makes multiple contacts with different domains of the 23S rRNA in the assembled 50S subunit and ribosome. The globular domain of the protein is located near the polypeptide exit tunnel on the outside of the subunit, while an extended beta-hairpin is found that lines the wall of the exit tunnel in the center of the 70S ribosome. The polypeptide is Large ribosomal subunit protein uL22 (Paracidovorax citrulli (strain AAC00-1) (Acidovorax citrulli)).